The sequence spans 101 residues: Cysteine-rich and transmembrane domain-containing protein B (101 aa).

The segment at 1–80 is disordered; it reads MSQQPPAVGV…PQQQQQQKHS (80 aa). Positions 24-43 are enriched in pro residues; it reads DAYPPPGQPYPQQGYPPPQG. Positions 59–77 are enriched in low complexity; sequence YPEQGYPQQGYPPQQQQQQ. A helical membrane pass occupies residues 78 to 95; sequence KHSPGMLEGCIAALCCYC.

The protein belongs to the CYSTM1 family.

Its subcellular location is the membrane. In Arabidopsis thaliana (Mouse-ear cress), this protein is Cysteine-rich and transmembrane domain-containing protein B.